A 289-amino-acid chain; its full sequence is Acetyl-coenzyme A carboxylase carboxyl transferase subunit beta (289 aa).

Residues 24–289 (LWIKCPESGE…NSPRRAPIPA (266 aa)) enclose the CoA carboxyltransferase N-terminal domain.

This sequence belongs to the AccD/PCCB family. In terms of assembly, acetyl-CoA carboxylase is a heterohexamer composed of biotin carboxyl carrier protein (AccB), biotin carboxylase (AccC) and two subunits each of ACCase subunit alpha (AccA) and ACCase subunit beta (AccD).

The protein localises to the cytoplasm. It catalyses the reaction N(6)-carboxybiotinyl-L-lysyl-[protein] + acetyl-CoA = N(6)-biotinyl-L-lysyl-[protein] + malonyl-CoA. It functions in the pathway lipid metabolism; malonyl-CoA biosynthesis; malonyl-CoA from acetyl-CoA: step 1/1. In terms of biological role, component of the acetyl coenzyme A carboxylase (ACC) complex. Biotin carboxylase (BC) catalyzes the carboxylation of biotin on its carrier protein (BCCP) and then the CO(2) group is transferred by the transcarboxylase to acetyl-CoA to form malonyl-CoA. This is Acetyl-coenzyme A carboxylase carboxyl transferase subunit beta from Beijerinckia indica subsp. indica (strain ATCC 9039 / DSM 1715 / NCIMB 8712).